Reading from the N-terminus, the 329-residue chain is Trem-like transcript 2 protein (329 aa).

Positions 1–24 are cleaved as a signal peptide; the sequence is MEPWPLTFLLLLLLLLWLQGCVSG. Residues 25–126 enclose the Ig-like V-type domain; sequence HSNENLYRKV…HFYPLVGFQL (102 aa). Residues 25–270 lie on the Extracellular side of the membrane; it reads HSNENLYRKV…NRSQETYIPA (246 aa). 2 disulfide bridges follow: Cys-46-Cys-110 and Cys-61-Cys-68. The segment at 202-259 is disordered; sequence FIDTSGTVTEPERNTESQPATLSPSNARSFSADPVTTSTMSRHQSSSLSTTGTCHPLT. The segment covering 217 to 259 has biased composition (polar residues); that stretch reads ESQPATLSPSNARSFSADPVTTSTMSRHQSSSLSTTGTCHPLT. N-linked (GlcNAc...) asparagine glycosylation occurs at Asn-261. Residues 271 to 291 form a helical membrane-spanning segment; that stretch reads MVVVLTFLPAPVVLVVAYGFW. Residues 292–329 are Cytoplasmic-facing; that stretch reads KKRHMGRYNLGSNYAKPWIHLPEGPETPWKPAWSKITQ.

As to quaternary structure, interacts with CD276 and this interaction enhances T-cell activation. In terms of tissue distribution, detected in B-lymphocytes and macrophages. Detected in spleen, lymph nodes, blood, bone marrow and cells from the peritoneal cavity (at protein level).

The protein localises to the cell membrane. Functionally, cell surface receptor that may play a role in the innate and adaptive immune response. Acts as a counter-receptor for CD276 and interaction with CD276 on T-cells enhances T-cell activation. This is Trem-like transcript 2 protein (Treml2) from Mus musculus (Mouse).